Consider the following 508-residue polypeptide: Zinc finger CCCH-type with G patch domain-containing protein (508 aa).

The segment at 67–86 is disordered; the sequence is QQESSHHDSGTPETDTKTSV. Basic and acidic residues predominate over residues 69–86; it reads ESSHHDSGTPETDTKTSV. The C3H1-type zinc finger occupies 161-188; the sequence is RSMVPCPYFLEGKCKFAGAECRFSHGYL. The segment at 253 to 282 is disordered; the sequence is IYPLGPEEVESDSESDSQSDTGDSSSSKAA. Positions 259–269 are enriched in acidic residues; sequence EEVESDSESDS. A compositionally biased stretch (low complexity) spans 270 to 279; the sequence is QSDTGDSSSS. The G-patch domain maps to 310–356; it reads TKGIGSKLMAKMGYIFGKGLGKDGEGRVEPIEVVVLPQGKSLDKCAE. A disordered region spans residues 404 to 426; sequence SLHDLRVSHPGAKPDIRKTRKSA.

The protein localises to the nucleus. Functionally, transcription repressor. The sequence is that of Zinc finger CCCH-type with G patch domain-containing protein from Nematostella vectensis (Starlet sea anemone).